A 398-amino-acid chain; its full sequence is Energy-coupling factor transporter ATP-binding protein EcfA2 (398 aa).

The 236-residue stretch at 5 to 240 (IELKDLEYAY…KELVRRARLK (236 aa)) folds into the ABC transporter domain. 38 to 45 (GSNGAGKS) is a binding site for ATP.

This sequence belongs to the ABC transporter superfamily. Energy-coupling factor EcfA family. In terms of assembly, forms a stable energy-coupling factor (ECF) transporter complex composed of 2 membrane-embedded substrate-binding proteins (S component), 2 ATP-binding proteins (A component) and 2 transmembrane proteins (T component).

It localises to the cell membrane. ATP-binding (A) component of a common energy-coupling factor (ECF) ABC-transporter complex. Unlike classic ABC transporters this ECF transporter provides the energy necessary to transport a number of different substrates. This chain is Energy-coupling factor transporter ATP-binding protein EcfA2, found in Methanospirillum hungatei JF-1 (strain ATCC 27890 / DSM 864 / NBRC 100397 / JF-1).